The primary structure comprises 311 residues: Aspartate carbamoyltransferase catalytic subunit (311 aa).

Residues R55 and T56 each contribute to the carbamoyl phosphate site. K83 is an L-aspartate binding site. Carbamoyl phosphate is bound by residues R105, H133, and Q136. L-aspartate is bound by residues R166 and R220. G261 and P262 together coordinate carbamoyl phosphate.

The protein belongs to the aspartate/ornithine carbamoyltransferase superfamily. ATCase family. In terms of assembly, heterododecamer (2C3:3R2) of six catalytic PyrB chains organized as two trimers (C3), and six regulatory PyrI chains organized as three dimers (R2).

The enzyme catalyses carbamoyl phosphate + L-aspartate = N-carbamoyl-L-aspartate + phosphate + H(+). The protein operates within pyrimidine metabolism; UMP biosynthesis via de novo pathway; (S)-dihydroorotate from bicarbonate: step 2/3. Functionally, catalyzes the condensation of carbamoyl phosphate and aspartate to form carbamoyl aspartate and inorganic phosphate, the committed step in the de novo pyrimidine nucleotide biosynthesis pathway. This is Aspartate carbamoyltransferase catalytic subunit from Chlorobium chlorochromatii (strain CaD3).